A 513-amino-acid chain; its full sequence is MLPRSLGHSTSELSPPFDGPNGVERYVSETRSLLRKGYEKYLRRGVPFQMRNPVEELGAQVVLPPKYLDEVKRAPTDLFSFEAYSEKAFLLNYSRAPRQTEAAAHIVRVDLTRNLGKLITFYSDFAIFEVCLPLVLIRDLGALVTDLWNESALYLDKTYNSEWQTKQAYEVVCGFVARVTSVAMVGAPLCRNPVWNRIVVETTMASFGAAQAIKDKYSARWRWLAPWSESIQKDLRRIRKESIELLKPLYEDRKAAVSRSDDVQGSSEMFRDTLYWLITSNQKDRSLSGITESQLFLSLAAIHTTSATLNSFVYDWIAHPEYHGEILAEVKETLAQVQLNGGKWTLQHVAMLRKLDSFMKESARINPIGFVSIQRYTLKPYTFKDGFQLPAGVSFVFHSDGVHHDADNYPDPEKFDAYRHLHLRETVDPNRFHFASVSDSALGFGAGNHACPGRFLSAIIMKFFLIQFMTAYEMKYEHGGIERLPNHDNSNTTAPNRTVNLLVRRCDGTSNNA.

The segment at 1–21 is disordered; it reads MLPRSLGHSTSELSPPFDGPN. Cysteine 451 is a binding site for heme.

The protein belongs to the cytochrome P450 family. Heme is required as a cofactor.

Its pathway is secondary metabolite biosynthesis. Its function is as follows. Cytochrome P450 monooxygenase; part of the gene cluster that mediates the biosynthesis of a tyrosine-derived cytochalasan acting as a fungal signal recognized by resistant rice plants and leads to avirulence in Pi33 resistant rice cultivars. The first step in the pathway is catalyzed by the hybrid PKS-NRPS ACE1, assisted by the enoyl reductase RAP1, that are responsible for fusion of the tyrosine precursor and the polyketide backbone. The polyketide synthase module (PKS) of ACE1 is responsible for the synthesis of the polyketide backbone and the downstream nonribosomal peptide synthetase (NRPS) amidates the carboxyl end of the polyketide with the tyrosine precursor. Because ACE1 lacks a designated enoylreductase (ER) domain, the required activity is provided the enoyl reductase RAP1. Reduction by the hydrolyase ORFZ, followed by dehydration and intra-molecular Diels-Alder cyclization by the Diels-Alderase ORF3 then yield the required isoindolone-fused macrocycle. A number of oxidative steps catalyzed by the tailoring enzymes identified within the cluster, including cytochrome P450 monooxygenases CYP1 to CYP4, the FAD-linked oxidoreductase OXR2 and the short-chain dehydrogenase/reductase OXR1, are further required to afford the final cytochalasans that confer avirulence and which have still to be identified. The monooxygenase CYP1 has been shown to be a site-selective C-18 hydroxylase whereas the function of CYP3 is the site-selective epoxidation of the C-6/C-7 olefin that is present in some intermediate compounds. Finally, SYN2 and RAP2 are not required for avirulence in Pi33 resistant rice cultivars. The chain is Cytochrome P450 monooxygenase CYP3 from Pyricularia oryzae (strain 70-15 / ATCC MYA-4617 / FGSC 8958) (Rice blast fungus).